The primary structure comprises 290 residues: Small ribosomal subunit protein uS2 (290 aa).

The protein belongs to the universal ribosomal protein uS2 family. As to quaternary structure, component of the small ribosomal subunit. Mature ribosomes consist of a small (40S) and a large (60S) subunit. The 40S subunit contains about 33 different proteins and 1 molecule of RNA (18S). The 60S subunit contains about 49 different proteins and 3 molecules of RNA (28S, 5.8S and 5S). Interacts with ribosomal protein S21.

The protein resides in the cytoplasm. Required for the assembly and/or stability of the 40S ribosomal subunit. Required for the processing of the 20S rRNA-precursor to mature 18S rRNA in a late step of the maturation of 40S ribosomal subunits. This Culex quinquefasciatus (Southern house mosquito) protein is Small ribosomal subunit protein uS2.